Reading from the N-terminus, the 196-residue chain is ATP-dependent Clp protease proteolytic subunit (196 aa).

Residue S98 is the Nucleophile of the active site. Residue H123 is part of the active site.

The protein belongs to the peptidase S14 family. In terms of assembly, fourteen ClpP subunits assemble into 2 heptameric rings which stack back to back to give a disk-like structure with a central cavity, resembling the structure of eukaryotic proteasomes.

The protein localises to the cytoplasm. The enzyme catalyses Hydrolysis of proteins to small peptides in the presence of ATP and magnesium. alpha-casein is the usual test substrate. In the absence of ATP, only oligopeptides shorter than five residues are hydrolyzed (such as succinyl-Leu-Tyr-|-NHMec, and Leu-Tyr-Leu-|-Tyr-Trp, in which cleavage of the -Tyr-|-Leu- and -Tyr-|-Trp bonds also occurs).. Its function is as follows. Cleaves peptides in various proteins in a process that requires ATP hydrolysis. Has a chymotrypsin-like activity. Plays a major role in the degradation of misfolded proteins. This chain is ATP-dependent Clp protease proteolytic subunit, found in Actinobacillus pleuropneumoniae serotype 7 (strain AP76).